Consider the following 365-residue polypeptide: N-acetylgalactosamine-N,N'-diacetylbacillosaminyl-diphospho-undecaprenol 4-alpha-N-acetylgalactosaminyltransferase (365 aa).

It belongs to the glycosyltransferase group 1 family.

Its subcellular location is the cell inner membrane. It carries out the reaction N-acetyl-alpha-D-galactosaminyl-(1-&gt;3)-N,N'-diacetyl-alpha-D-bacillosaminyl-tri-trans,hepta-cis-undecaprenyl diphosphate + UDP-N-acetyl-alpha-D-galactosamine = N-acetyl-alpha-D-galactosaminyl-(1-&gt;4)-N-acetyl-alpha-D-galactosaminyl-(1-&gt;3)-N,N'-diacetyl-alpha-D-bacillosaminyl-tri-trans,heptacis-undecaprenyl diphosphate + UDP + H(+). It participates in protein modification; protein glycosylation. Its function is as follows. Adds a GalNAc residue on to the Und-PP-Bac2,4diNAc-GalNAc disaccharide in the N-linked protein glycosylation pathway. Transfers the third sugar in the heptasaccharide biosynthesis. This chain is N-acetylgalactosamine-N,N'-diacetylbacillosaminyl-diphospho-undecaprenol 4-alpha-N-acetylgalactosaminyltransferase (pglJ), found in Campylobacter jejuni subsp. jejuni serotype O:2 (strain ATCC 700819 / NCTC 11168).